The sequence spans 286 residues: Myb family transcription factor PHL7 (286 aa).

Residues 12 to 72 (HASKQRLRWT…HLQKYRLAKY (61 aa)) enclose the HTH myb-type domain. Residues 43–68 (PKGVLRVMGVQGLTIYHVKSHLQKYR) constitute a DNA-binding region (H-T-H motif). The segment at 74–97 (PDSSSEGKKTDKKESGDMLSGLDG) is disordered. The span at 78–89 (SEGKKTDKKESG) shows a compositional bias: basic and acidic residues. Residues 104 to 124 (TEALKLQMEVQKRLHEQLEVQ) are a coiled coil. An LHEQLE motif is present at residues 117 to 122 (LHEQLE). The tract at residues 152–227 (LGEPSAPVTG…TGEERLSKKP (76 aa)) is disordered.

Belongs to the MYB-CC family.

The protein localises to the nucleus. The polypeptide is Myb family transcription factor PHL7 (Arabidopsis thaliana (Mouse-ear cress)).